We begin with the raw amino-acid sequence, 79 residues long: Morintide mO2 (79 aa).

The signal sequence occupies residues 1–20 (MAKLSFLSLFLLCLVATATA). One can recognise a Chitin-binding type-1 domain in the interval 21–63 (QNCGRQAGNRACANGLCCSQYGFCGSTSEYCSRANGCQSNCRG). 4 cysteine pairs are disulfide-bonded: Cys23–Cys38, Cys32–Cys44, Cys37–Cys51, and Cys57–Cys61. Positions 64–79 (GGGAGGAGGGAGGGSP) are excised as a propeptide.

Leaves (at protein level).

Chitin-binding protein which functions in defense against chitin-containing fungal pathogens. The polypeptide is Morintide mO2 (Moringa oleifera (Horseradish tree)).